We begin with the raw amino-acid sequence, 633 residues long: Replication protein E1 (633 aa).

The Nuclear localization signal signature appears at 84-86 (KRK). Phosphoserine; by host is present on residues Ser-90, Ser-94, and Ser-108. The short motif at 107–116 (LSPRLGAISL) is the Nuclear export signal element. The segment at 148–168 (NTEGTDETETDQVQTVSGETT) is disordered. Residues 158–168 (DQVQTVSGETT) are compositionally biased toward polar residues. The DNA-binding region stretch occupies residues 169–335 (TDSLGRQQIT…QTVIEYSLAD (167 aa)). Residues 434–584 (VDFISFMIAL…FPFDSNGNPV (151 aa)) form the SF3 helicase domain. 460 to 467 (GPPDTGKS) contacts ATP. Lys-541 is covalently cross-linked (Glycyl lysine isopeptide (Lys-Gly) (interchain with G-Cter in SUMO)). The segment at 609 to 633 (DNEEEENGDPSNTFRCVPGKASRPI) is disordered.

It belongs to the papillomaviridae E1 protein family. In terms of assembly, can form hexamers. Interacts with E2 protein; this interaction increases E1 DNA binding specificity. Interacts with host DNA polymerase subunit POLA2. Interacts with host single stranded DNA-binding protein RPA1. Interacts with host TOP1; this interaction stimulates the enzymatic activity of TOP1. Post-translationally, phosphorylated. Sumoylated.

Its subcellular location is the host nucleus. It carries out the reaction Couples ATP hydrolysis with the unwinding of duplex DNA by translocating in the 3'-5' direction.. The enzyme catalyses ATP + H2O = ADP + phosphate + H(+). Its function is as follows. ATP-dependent DNA 3'-5' helicase required for initiation of viral DNA replication. It forms a complex with the viral E2 protein. The E1-E2 complex binds to the replication origin which contains binding sites for both proteins. During the initial step, a dimer of E1 interacts with a dimer of protein E2 leading to a complex that binds the viral origin of replication with high specificity. Then, a second dimer of E1 displaces the E2 dimer in an ATP-dependent manner to form the E1 tetramer. Following this, two E1 monomers are added to each half of the site, which results in the formation of two E1 trimers on the viral ori. Subsequently, two hexamers will be created. The double hexamer acts as a bi-directional helicase machinery and unwinds the viral DNA and then recruits the host DNA polymerase to start replication. The sequence is that of Replication protein E1 from Homo sapiens (Human).